We begin with the raw amino-acid sequence, 520 residues long: MMISCKKLFVFRQLPAVRRCLAAAAFSTPRATSYRILSSAGSGSTRADAPQVRRLHTTRDLLAKDYYATLGVAKNANGKDIKKAYYQLAKKYHPDTNKEDPDAGRKFQEVSEAYEVLSDEQKRREYDTYGQTAENIGRQGGGFPGGGAGGFGPEGFSQSWQFRSSIDPEELFRKIFGEGNFRTNSFDDFADSKFGFGQAQEMVMDLTFAQAARGVNKDVNVNVVDQCPKCAGTKCEPGTKPGRCQYCNGTGFETVSTGPFVMRSTCRYCQGTRQHIKYPCSECEGKGRTVQRRKVTVPVPAGIENGQTVRMQVGSKELFVTFRVERSDYFRREGADVHTDAAISLAQAVLGGTVRVQGVYEDQWINVEPGTSSHHKIMLRGKGLKRVNAHGHGDHYVHVKITVPSAKKLDKKRLALIEAYAELEEDTPGQIHGIANRKDGSKQATAGASEEPGAGAAAKASAAAAGSGASKPGPGAEESEGKDQWTDNKKTKAKEGGGSGSGQGDGGGGGFISKIKSMFN.

Residues 1–62 (MMISCKKLFV…RRLHTTRDLL (62 aa)) constitute a mitochondrion transit peptide. At arginine 30 the chain carries Omega-N-methylarginine. One can recognise a J domain in the interval 65–130 (DYYATLGVAK…QKRREYDTYG (66 aa)). Position 106 is an N6-acetyllysine (lysine 106). Residues 214–292 (GVNKDVNVNV…CEGKGRTVQR (79 aa)) form a CR-type zinc finger. Cysteine 227, cysteine 230, cysteine 244, cysteine 247, cysteine 266, cysteine 269, cysteine 280, and cysteine 283 together coordinate Zn(2+). The CXXCXGXG motif; approximate repeat unit spans residues 227 to 234 (CPKCAGTK). The stretch at 244 to 251 (CQYCNGTG) is one CXXCXGXG motif repeat. Residues 266-273 (CRYCQGTR) form a CXXCXGXG motif; approximate repeat. Residues 280–287 (CSECEGKG) form a CXXCXGXG motif repeat. The tract at residues 430–520 (QIHGIANRKD…FISKIKSMFN (91 aa)) is disordered. Residues 446–476 (AGASEEPGAGAAAKASAAAAGSGASKPGPGA) are compositionally biased toward low complexity. The span at 479 to 495 (SEGKDQWTDNKKTKAKE) shows a compositional bias: basic and acidic residues. The span at 496-511 (GGGSGSGQGDGGGGGF) shows a compositional bias: gly residues.

In terms of assembly, interacts with ptc (via C-terminal cytoplasmic region); the interaction is probably direct. Interacts with hh/hedgehog; the interaction is probably mediated by the hedgehog receptor ptc. Appears to produce proteins of differing size. Predicted to have a molecular mass of 56 kDa (TID56) however proteins of 50 kDa, 47 kDa and 40 kDa have been identified and named TID50, TID47 and TID40. TID50 and TID40 localize to the mitochondria while TID47 localizes to the cytoplasm. TID50 is probably TID56 that has undergone mitochondrial transit peptide processing. TID40 and TID47 may be alternately processed proteins or may be isoforms resulting from alternative splicing. In terms of tissue distribution, ubiquitously expressed throughout embryonic development. In larvae, expression is seen in sensory organs, gopplet cells, gonads, imaginal disks, proventriculus, fat body, hematopoietic organ, midgut, Malpighian tubules and ring gland.

The protein localises to the cytoplasm. It is found in the cytosol. It localises to the mitochondrion. The protein resides in the mitochondrion outer membrane. In terms of biological role, involved in hh/hedgehog signaling. May act as a tumor suppressor in larval imaginal disks. The chain is DnaJ homolog l(2)tid, mitochondrial from Drosophila melanogaster (Fruit fly).